The primary structure comprises 406 residues: MMEGLDDGPDFLSEEDRGLKAINVDLQSDAALQVDISDALSERDRVKFTVHTKSSLPNFKQNEFSVVRQHEEFIWLHDSFVENEDYAGYIIPPAPPRPDFDASREKLQKLGEGEGSMTKEEFTKMKQELEAEYLAIFKKTVAMHEVFLCRVAAHPILRKDLNFHVFLEYNQDLSVRGKNKKEKLEDFFKNMVKSADGVIVSGVKDVDDFFEHERTFLLEYHNRVKDASAKSDRMTRSHKSAADDYNRIGSSLYALGTQDSTDICKFFLKVSELFDKTRKIEARVSADEDLKLSDLLKYYLRESQAAKDLLYRRSRSLVDYENANKALDKARAKNKDVLQAETSQQLCCQKFEKISESAKQELIDFKTRRVAAFRKNLVELAELELKHAKGNLQLLQNCLAVLNGDT.

Methionine 1 carries the N-acetylmethionine modification. N-acetylmethionine; in Sorting nexin-6, N-terminally processed is present on methionine 2. The interaction with PIM1 stretch occupies residues 2 to 179 (MEGLDDGPDF…NQDLSVRGKN (178 aa)). One can recognise a PX domain in the interval 26 to 173 (LQSDAALQVD…HVFLEYNQDL (148 aa)). Residues 41–47 (SERDRVK), 100–106 (FDASREK), and 114–117 (EGSM) contribute to the a 1,2-diacyl-sn-glycero-3-phospho-(1D-myo-inositol-4,5-bisphosphate) site. Serine 116 and serine 194 each carry phosphoserine. The tract at residues 182–199 (EKLEDFFKNMVKSADGVI) is membrane-binding amphipathic helix. A BAR domain is found at 203-406 (VKDVDDFFEH…NCLAVLNGDT (204 aa)).

Belongs to the sorting nexin family. Forms heterodimers with BAR domain-containing sorting nexins SNX1 and SNX2. The heterodimers are proposed to self-assemble into helical arrays on the membrane to stabilize and expand local membrane curvature underlying endosomal tubule formation. Thought to be a component of the originally described retromer complex (also called SNX-BAR retromer) which is a pentamer containing the heterotrimeric retromer cargo-selective complex (CSC), also described as vacuolar protein sorting subcomplex (VPS), and a heterodimeric membrane-deforming subcomplex formed between SNX1 or SNX2 and SNX5 or SNX6 (also called SNX-BAR subcomplex); the respective CSC and SNX-BAR subcomplexes associate with low affinity. Interacts with SNX1, SNX2, VPS26A, VPS29, VPS35, TGFB receptors, BACE1, BRMS1, PIP5K1C. Interacts with DCTN1; the association with DCTN1 is involved in movement of retromer-c ontaining vesicles toward the TGN. Interacts with PIM1; translocating SNX6 to the nucleus. Interacts with CDKN1B and GIT1. In vitro phosphorylated by PIM1; not affecting PIM1-dependent nuclear translocation.

Its subcellular location is the early endosome membrane. It is found in the cytoplasmic vesicle. The protein localises to the cytoplasm. It localises to the nucleus. Involved in several stages of intracellular trafficking. Interacts with membranes phosphatidylinositol 3,4-bisphosphate and/or phosphatidylinositol 4,5-bisphosphate. Acts in part as component of the retromer membrane-deforming SNX-BAR subcomplex. The SNX-BAR retromer mediates retrograde transport of cargo proteins from endosomes to the trans-Golgi network (TGN) and is involved in endosome-to-plasma membrane transport for cargo protein recycling. The SNX-BAR subcomplex functions to deform the donor membrane into a tubular profile called endosome-to-TGN transport carrier (ETC). Does not have in vitro vesicle-to-membrane remodeling activity. Involved in retrograde endosome-to-TGN transport of lysosomal enzyme receptor IGF2R. May function as link between transport vesicles and dynactin. Negatively regulates retrograde transport of BACE1 from the cell surface to the trans-Golgi network. Involved in E-cadherin sorting and degradation; inhibits PIP5K1C-mediated E-cadherin degradation. In association with GIT1 involved in EGFR degradation. Promotes lysosomal degradation of CDKN1B. May contribute to transcription regulation. This is Sorting nexin-6 (Snx6) from Mus musculus (Mouse).